We begin with the raw amino-acid sequence, 73 residues long: Potassium channel toxin alpha-KTx 27.4 (73 aa).

The N-terminal stretch at 1 to 26 (MKFLFLTLVLLYFTAILVFIVFPSYA) is a signal peptide.

Belongs to the short scorpion toxin superfamily. Potassium channel inhibitor family. Alpha-KTx 27 subfamily. Post-translationally, contains 4 disulfide bonds. In terms of tissue distribution, expressed by the venom gland.

The protein resides in the secreted. In Mesobuthus gibbosus (Mediterranean checkered scorpion), this protein is Potassium channel toxin alpha-KTx 27.4.